The sequence spans 209 residues: Phosphopantothenoylcysteine decarboxylase (209 aa).

Residues 28–30 and 53–55 contribute to the FMN site; these read GSV and TKS. Residue histidine 90 is the Proton donor of the active site. FMN contacts are provided by residues 106–109 and alanine 140; that span reads SANT. Positions 142, 172, and 174 each coordinate N-[(R)-4-phosphopantothenoyl]-L-cysteine. Cysteine 175 functions as the Proton donor in the catalytic mechanism. Residue methionine 183 coordinates N-[(R)-4-phosphopantothenoyl]-L-cysteine.

This sequence belongs to the HFCD (homooligomeric flavin containing Cys decarboxylase) superfamily. As to quaternary structure, homotrimer. FMN serves as cofactor. In terms of tissue distribution, expressed in roots, shoots, leaves, flowers, developing siliques and seeds with highest expression in seed embryos and phloem.

It carries out the reaction N-[(R)-4-phosphopantothenoyl]-L-cysteine + H(+) = (R)-4'-phosphopantetheine + CO2. The protein operates within cofactor biosynthesis; coenzyme A biosynthesis; CoA from (R)-pantothenate: step 3/5. Functionally, involved in plant growth, and salt and osmotic tolerance. Catalyzes the decarboxylation of 4'-phosphopantothenoylcysteine to 4'-phosphopantetheine, a key step in coenzyme A biosynthesis. The enzyme is also able to decarboxylate pantothenoylcysteine to pantothenoylcysteamine. This Arabidopsis thaliana (Mouse-ear cress) protein is Phosphopantothenoylcysteine decarboxylase.